A 197-amino-acid chain; its full sequence is Nucleoid occlusion factor SlmA (197 aa).

Positions 7–67 (INRREHILQC…GLIDFIEESL (61 aa)) constitute an HTH tetR-type domain. A DNA-binding region (H-T-H motif) is located at residues 30–49 (TTAKLAAEVGVSEAALYRHF).

Belongs to the nucleoid occlusion factor SlmA family. Homodimer. Interacts with FtsZ.

Its subcellular location is the cytoplasm. The protein resides in the nucleoid. Functionally, required for nucleoid occlusion (NO) phenomenon, which prevents Z-ring formation and cell division over the nucleoid. Acts as a DNA-associated cell division inhibitor that binds simultaneously chromosomal DNA and FtsZ, and disrupts the assembly of FtsZ polymers. SlmA-DNA-binding sequences (SBS) are dispersed on non-Ter regions of the chromosome, preventing FtsZ polymerization at these regions. In Shewanella loihica (strain ATCC BAA-1088 / PV-4), this protein is Nucleoid occlusion factor SlmA.